We begin with the raw amino-acid sequence, 160 residues long: Cytochrome b6-f complex subunit 4 (160 aa).

The next 3 helical transmembrane spans lie at 36 to 56 (LLYI…GLAV), 95 to 115 (LLGV…PFLE), and 131 to 151 (TVFL…ALPI).

This sequence belongs to the cytochrome b family. PetD subfamily. The 4 large subunits of the cytochrome b6-f complex are cytochrome b6, subunit IV (17 kDa polypeptide, petD), cytochrome f and the Rieske protein, while the 4 small subunits are petG, petL, petM and petN. The complex functions as a dimer.

The protein resides in the plastid. Its subcellular location is the chloroplast thylakoid membrane. Functionally, component of the cytochrome b6-f complex, which mediates electron transfer between photosystem II (PSII) and photosystem I (PSI), cyclic electron flow around PSI, and state transitions. In Chara vulgaris (Common stonewort), this protein is Cytochrome b6-f complex subunit 4.